The primary structure comprises 1236 residues: Chitinase-like protein PB1E7.04c (1236 aa).

A signal peptide spans 1 to 19; that stretch reads MRLISSLLLLVYSARLALS. N-linked (GlcNAc...) asparagine glycans are attached at residues Asn21, Asn24, Asn54, Asn123, Asn225, Asn237, Asn255, Asn267, Asn277, Asn288, and Asn309. The GH18 domain maps to 26 to 325; sequence TAVLGYWGSN…EAIHKILDTK (300 aa). Disordered stretches follow at residues 326 to 367, 449 to 497, and 584 to 625; these read SKHS…TSSA, VSSI…QSTL, and TSSP…STIL. Residues 339–351 are compositionally biased toward polar residues; that stretch reads QGLESTSSIALNP. Over residues 352 to 367 the composition is skewed to low complexity; the sequence is TSSISSTSSSSSTSSA. Residues Asn715, Asn737, Asn768, Asn786, and Asn813 are each glycosylated (N-linked (GlcNAc...) asparagine). 4 disordered regions span residues 804–836, 868–927, 946–979, and 1125–1159; these read ISTS…LAAN, TTAL…TSSS, TPTS…SSIA, and AASG…TPSN. The span at 810–821 shows a compositional bias: polar residues; that stretch reads NEYNTSFHAPTV. Residues 822–832 are compositionally biased toward low complexity; it reads SSTTSSSSTTS. Over residues 1125–1156 the composition is skewed to low complexity; that stretch reads AASGSSTVTSSATASSSSSAATTADSSVTTDT.

Belongs to the glycosyl hydrolase 18 family. Chitinase class III subfamily.

The protein localises to the secreted. This is Chitinase-like protein PB1E7.04c from Schizosaccharomyces pombe (strain 972 / ATCC 24843) (Fission yeast).